The following is a 480-amino-acid chain: Voltage-gated potassium channel regulatory subunit KCNG2 (480 aa).

Disordered regions lie at residues 1-25 (MARL…GRGG) and 144-167 (AAEA…LGSG). Topologically, residues 1–187 (MARLPGHPEV…DVVENPHSGL (187 aa)) are cytoplasmic. The helical transmembrane segment at 188–209 (AGKLFAYVSVAFVAVTAVGLCL) threads the bilayer. At 210–230 (STMPDVRAEEERGECSTKCRN) the chain is on the extracellular side. The chain crosses the membrane as a helical span at residues 231 to 252 (LFVLETVCVAWFSFEFLLRSLQ). Residues 253–263 (AESKCAFLRTP) lie on the Cytoplasmic side of the membrane. A helical membrane pass occupies residues 264–284 (LAIIDILAILPFYVSLLAGLA). At 285–296 (AGPTGSKMLERA) the chain is on the extracellular side. A helical; Voltage-sensor transmembrane segment spans residues 297 to 317 (GLVLRLLRALRVLYVMRLARH). Residues 318 to 332 (SLGLRSLGLTVRRCA) lie on the Cytoplasmic side of the membrane. A helical membrane pass occupies residues 333-354 (REFGLLLLFLCVAMALFAPLVH). At 355–369 (LAERELGAHRDFSSV) the chain is on the extracellular side. The segment at residues 370–381 (PASYWWAVISMT) is an intramembrane region (helical). Residues 382–387 (TVGYGD) carry the Selectivity filter motif. The stretch at 382 to 389 (TVGYGDMV) is an intramembrane region. Over 390–396 (PRSLPGQ) the chain is Extracellular. The helical transmembrane segment at 397–425 (VVALSSILSGILLMAFPVTSIFHTFSRSY) threads the bilayer. Residues 426–480 (SELKEQQQRAASPEPVLREDSTRDDSTRSASATEDSSQDPETAGAAGSLPGPVGP) are Cytoplasmic-facing. The interval 429-480 (KEQQQRAASPEPVLREDSTRDDSTRSASATEDSSQDPETAGAAGSLPGPVGP) is disordered. Residues 441 to 452 (VLREDSTRDDST) are compositionally biased toward basic and acidic residues.

Belongs to the potassium channel family. G (TC 1.A.1.2) subfamily. Kv6.2/KCNG2 sub-subfamily. Heterodimer with KCNB1. Highly expressed in heart, in particular in right and left atrium, and detected at lower levels in the right and left ventricle.

It localises to the cell membrane. Functionally, regulatory alpha-subunit of the voltage-gated potassium (Kv) channel which, when coassembled with KCNB1, can modulate the kinetics and conductance-voltage relationship. Modulates channel activity by shifting the threshold and the half-maximal activation to more negative values. Potassium channel subunit that does not form functional channels by itself. This Rattus norvegicus (Rat) protein is Voltage-gated potassium channel regulatory subunit KCNG2.